The chain runs to 346 residues: tRNA N6-adenosine threonylcarbamoyltransferase (346 aa).

2 residues coordinate Fe cation: histidine 111 and histidine 115. Substrate-binding positions include 134-138 (LVSGG), aspartate 167, glycine 180, and asparagine 279. Aspartate 307 is a Fe cation binding site.

Belongs to the KAE1 / TsaD family. The cofactor is Fe(2+).

Its subcellular location is the cytoplasm. The catalysed reaction is L-threonylcarbamoyladenylate + adenosine(37) in tRNA = N(6)-L-threonylcarbamoyladenosine(37) in tRNA + AMP + H(+). In terms of biological role, required for the formation of a threonylcarbamoyl group on adenosine at position 37 (t(6)A37) in tRNAs that read codons beginning with adenine. Is involved in the transfer of the threonylcarbamoyl moiety of threonylcarbamoyl-AMP (TC-AMP) to the N6 group of A37, together with TsaE and TsaB. TsaD likely plays a direct catalytic role in this reaction. The protein is tRNA N6-adenosine threonylcarbamoyltransferase of Burkholderia vietnamiensis (strain G4 / LMG 22486) (Burkholderia cepacia (strain R1808)).